Here is a 249-residue protein sequence, read N- to C-terminus: MERLLIVNADDFGLSKGQNYGIIEACRNGIVTSTTALVNGQAIDHAVQLSRDEPSLAIGMHFVLTMGKPLTAMPGLTRDGVLGKWIWQLAEEDALPLEEITQELASQYLRFIELFGRKPTHLDSHHHVHMFPQIFPIVARFAAEEGIALRADRQMVFDLPVNLRTTQGFSSAFYGEEISESLFLQVLDDSSHRGERSLEVMCHPAFIDNTIRQSAYCLPRLTELDVLTSASLKYAIAERGYRLGSYLDV.

Residues His-61 and His-125 each contribute to the Mg(2+) site.

The protein belongs to the YdjC deacetylase family. ChbG subfamily. In terms of assembly, homodimer. The cofactor is Mg(2+).

The protein resides in the cytoplasm. It catalyses the reaction N,N'-diacetylchitobiose + H2O = N-acetyl-beta-D-glucosaminyl-(1-&gt;4)-D-glucosamine + acetate. The catalysed reaction is diacetylchitobiose-6'-phosphate + H2O = N'-monoacetylchitobiose-6'-phosphate + acetate. Its pathway is glycan degradation; chitin degradation. Its function is as follows. Involved in the degradation of chitin. ChbG is essential for growth on the acetylated chitooligosaccharides chitobiose and chitotriose but is dispensable for growth on cellobiose and chitosan dimer, the deacetylated form of chitobiose. Deacetylation of chitobiose-6-P and chitotriose-6-P is necessary for both the activation of the chb promoter by the regulatory protein ChbR and the hydrolysis of phosphorylated beta-glucosides by the phospho-beta-glucosidase ChbF. Catalyzes the removal of only one acetyl group from chitobiose-6-P to yield monoacetylchitobiose-6-P, the inducer of ChbR and the substrate of ChbF. The polypeptide is Chitooligosaccharide deacetylase (Escherichia coli O17:K52:H18 (strain UMN026 / ExPEC)).